The primary structure comprises 186 residues: Elongation factor P (186 aa).

It belongs to the elongation factor P family.

Its subcellular location is the cytoplasm. It participates in protein biosynthesis; polypeptide chain elongation. In terms of biological role, involved in peptide bond synthesis. Stimulates efficient translation and peptide-bond synthesis on native or reconstituted 70S ribosomes in vitro. Probably functions indirectly by altering the affinity of the ribosome for aminoacyl-tRNA, thus increasing their reactivity as acceptors for peptidyl transferase. The sequence is that of Elongation factor P from Laribacter hongkongensis (strain HLHK9).